The following is a 322-amino-acid chain: GTP 3',8-cyclase (322 aa).

Residues 4–229 (NFNRNIDYLR…IPVQMKKSGP (226 aa)) enclose the Radical SAM core domain. Residue arginine 13 coordinates GTP. [4Fe-4S] cluster contacts are provided by cysteine 20 and cysteine 24. Tyrosine 26 is an S-adenosyl-L-methionine binding site. Cysteine 27 provides a ligand contact to [4Fe-4S] cluster. Arginine 64 provides a ligand contact to GTP. Position 68 (glycine 68) interacts with S-adenosyl-L-methionine. Residue threonine 95 coordinates GTP. Serine 119 lines the S-adenosyl-L-methionine pocket. Lysine 156 contacts GTP. Methionine 190 contacts S-adenosyl-L-methionine. Positions 253 and 256 each coordinate [4Fe-4S] cluster. 258 to 260 (RLR) is a binding site for GTP. Position 270 (cysteine 270) interacts with [4Fe-4S] cluster.

This sequence belongs to the radical SAM superfamily. MoaA family. Monomer and homodimer. Requires [4Fe-4S] cluster as cofactor.

The enzyme catalyses GTP + AH2 + S-adenosyl-L-methionine = (8S)-3',8-cyclo-7,8-dihydroguanosine 5'-triphosphate + 5'-deoxyadenosine + L-methionine + A + H(+). The protein operates within cofactor biosynthesis; molybdopterin biosynthesis. In terms of biological role, catalyzes the cyclization of GTP to (8S)-3',8-cyclo-7,8-dihydroguanosine 5'-triphosphate. In Thermodesulfovibrio yellowstonii (strain ATCC 51303 / DSM 11347 / YP87), this protein is GTP 3',8-cyclase.